The sequence spans 690 residues: Elongation factor G (690 aa).

Residues 8–283 (EKYRNIGIMA…AVVDYLPSPL (276 aa)) enclose the tr-type G domain. GTP contacts are provided by residues 17–24 (AHIDAGKT), 81–85 (DTPGH), and 135–138 (NKLD).

This sequence belongs to the TRAFAC class translation factor GTPase superfamily. Classic translation factor GTPase family. EF-G/EF-2 subfamily.

Its subcellular location is the cytoplasm. In terms of biological role, catalyzes the GTP-dependent ribosomal translocation step during translation elongation. During this step, the ribosome changes from the pre-translocational (PRE) to the post-translocational (POST) state as the newly formed A-site-bound peptidyl-tRNA and P-site-bound deacylated tRNA move to the P and E sites, respectively. Catalyzes the coordinated movement of the two tRNA molecules, the mRNA and conformational changes in the ribosome. This chain is Elongation factor G, found in Rhizorhabdus wittichii (strain DSM 6014 / CCUG 31198 / JCM 15750 / NBRC 105917 / EY 4224 / RW1) (Sphingomonas wittichii).